A 591-amino-acid polypeptide reads, in one-letter code: MPQSRTHSRTATKHIFVSGGVASSLGKGLTASSLGQLLTARGMRVTMQKLDPYLNVDPGTMNPFQHGEVFVTDDGAETDLDVGHYERFLDRDLSGQANVTTGQVYSTVIAKERRGEYLGDTVQVIPHITDEIKSRILAMSGPDLQGHQPDVVITEIGGTVGDIESQPFLEAARQVRHDVGRDNVFFLHVSLVPYLAPSGELKTKPTQHSVAALRNIGIQPDALILRCDREVPPALKNKIALMCDVDVDGCISTPDAPSIYDIPKVLHSEGLDAYVVRQLGLPFRDVDWTVWGNLLERVHQPRETVRIALVGKYVDLPDAYLSVTEALRAGGFANRSKVEISWVPSDACETEAGAQAALGDVDGVLIPGGFGIRGIEGKLGAIRYARHRKIPLLGLCLGLQCVVIEAARSVGLDDANSAEFEPETTHPVISTMADQEDVIAGEADLGGTMRLGAYPAVLTKGSVVARAYGSEEVSERHRHRYEVNNAYRDRIAKSGLRFSGTSPDGHLVEFVEYPADQHPFFVATQAHPELKSRPTRPHPLFAAFVDAALKHKLEERLPVDVHGEERAAVATDDELADSADRDEVASVDSAG.

The amidoligase domain stretch occupies residues 1 to 281 (MPQSRTHSRT…DAYVVRQLGL (281 aa)). Serine 23 serves as a coordination point for CTP. Serine 23 contributes to the UTP binding site. ATP contacts are provided by residues 24-29 (SLGKGL) and aspartate 81. Residues aspartate 81 and glutamate 155 each contribute to the Mg(2+) site. Residues 162–164 (DIE), 202–207 (KTKPTQ), and lysine 238 contribute to the CTP site. UTP is bound by residues 202-207 (KTKPTQ) and lysine 238. The Glutamine amidotransferase type-1 domain occupies 306–554 (RIALVGKYVD…VDAALKHKLE (249 aa)). Glycine 369 provides a ligand contact to L-glutamine. Cysteine 396 functions as the Nucleophile; for glutamine hydrolysis in the catalytic mechanism. L-glutamine is bound by residues 397–400 (LGLQ), glutamate 419, and arginine 480. Residues histidine 527 and glutamate 529 contribute to the active site. The interval 568–591 (AVATDDELADSADRDEVASVDSAG) is disordered.

Belongs to the CTP synthase family. As to quaternary structure, homotetramer.

It carries out the reaction UTP + L-glutamine + ATP + H2O = CTP + L-glutamate + ADP + phosphate + 2 H(+). It catalyses the reaction L-glutamine + H2O = L-glutamate + NH4(+). The catalysed reaction is UTP + NH4(+) + ATP = CTP + ADP + phosphate + 2 H(+). It participates in pyrimidine metabolism; CTP biosynthesis via de novo pathway; CTP from UDP: step 2/2. With respect to regulation, allosterically activated by GTP, when glutamine is the substrate; GTP has no effect on the reaction when ammonia is the substrate. The allosteric effector GTP functions by stabilizing the protein conformation that binds the tetrahedral intermediate(s) formed during glutamine hydrolysis. Inhibited by the product CTP, via allosteric rather than competitive inhibition. Functionally, catalyzes the ATP-dependent amination of UTP to CTP with either L-glutamine or ammonia as the source of nitrogen. Regulates intracellular CTP levels through interactions with the four ribonucleotide triphosphates. The sequence is that of CTP synthase from Rhodococcus jostii (strain RHA1).